Here is a 1005-residue protein sequence, read N- to C-terminus: MSMILKEIRMNNFKSHVNSRIKFEKGIVAIIGENGSGKSSIFEAVFFALFGAGSNFNYDTIITKGKKSVYVELDFEVNGNNYKIIREYDSGRGGAKLYKNGKPYATTISAVNKAVNEILGVDRNMFLNSIYIKQGEIAKFLSLKPSEKLETVAKLLGIDEFEKCYQKMGEIVKEYEKRLERIEGELNYKENYEKELKNKMSQLEEKNKKLMEINDKLNKIKKEFEDIEKLFNEWENKKLLYEKFINKLEERKRALELKNQELKILEYDLNTVVEARETLNRHKDEYEKYKSLVDEIRKIESRLRELKSHYEDYLKLTKQLEIIKGDIEKLKEFINKSKYRDDIDNLDTLLNKIKDEIERVETIKDLLEELKNLNEEIEKIEKYKRICEECKEYYEKYLELEEKAVEYNKLTLEYITLLQEKKSIEKNINDLETRINKLLEETKNIDIESIENSLKEIEEKKKVLENLQKEKIELNKKLGEINSEIKRLKKILDELKEVEGKCPLCKTPIDENKKMELINQHKTQLNNKYTELEEINKKIREIEKDIEKLKKEIDKEENLKTLKTLYLEKQSQIEELELKLKNYKEQLDEINKKISNYVINGKPVDEILEDIKSQLNKFKNFYNQYLSAVSYLNSVDEEGIRNRIKEIENIVSGWNKEKCREELNKLREDEREINRLKDKLNELKNKEKELIEIENRRSLKFDKYKEYLGLTEKLEELKNIKDGLEEIYNICNSKILAIDNIKRKYNKEDIEIYLNNKILEVNKEINDIEERISYINQKLDEINYNEEEHKKIKELYENKRQELDNVREQKTEIETGIEYLKKDVESLKARLKEMSNLEKEKEKLTKFVEYLDKVRRIFGRNGFQAYLREKYVPLIQKYLNEAFSEFDLPYSFVELTKDFEVRVHAPNGVLTIDNLSGGEQIAVALSLRLAIANALIGNRVECIILDEPTVYLDENRRAKLAEIFRKVKSIPQMIIITHHRELEDVADVIINVKKDGNVSKVKING.

Residues Lys14, 35 to 40, 62 to 64, and Gln134 contribute to the ATP site; these read GSGKSS and ITK. Coiled-coil stretches lie at residues 189–230, 292–321, 346–379, and 404–498; these read KENY…IEKL, LVDE…KQLE, LDTL…EIEK, and AVEY…LKEV. Positions 457–554 constitute a Zinc-hook domain; the sequence is IEEKKKVLEN…DIEKLKKEID (98 aa). Zn(2+) is bound by residues Cys502 and Cys505. Coiled-coil stretches lie at residues 523 to 600, 656 to 692, and 800 to 834; these read TQLN…YVIN, KEKC…ELIE, and RQEL…LKEM.

It belongs to the SMC family. RAD50 subfamily. Homodimer. Forms a heterotetramer composed of two Mre11 subunits and two Rad50 subunits. Zn(2+) is required as a cofactor.

In terms of biological role, part of the Rad50/Mre11 complex, which is involved in the early steps of DNA double-strand break (DSB) repair. The complex may facilitate opening of the processed DNA ends to aid in the recruitment of HerA and NurA. Rad50 controls the balance between DNA end bridging and DNA resection via ATP-dependent structural rearrangements of the Rad50/Mre11 complex. This is DNA double-strand break repair Rad50 ATPase from Methanocaldococcus jannaschii (strain ATCC 43067 / DSM 2661 / JAL-1 / JCM 10045 / NBRC 100440) (Methanococcus jannaschii).